The chain runs to 1303 residues: D-lysergyl-peptide-synthetase subunit 2 (1303 aa).

The interval 256 to 653 (EWCRWTPSAV…CRKSTQVKLR (398 aa)) is adenylation (A) domain. Residues 793–869 (APSNDIEEAF…ELARHTKLVA (77 aa)) form the Carrier domain. An O-(pantetheine 4'-phosphoryl)serine modification is found at Ser-830. Residues 905–1294 (EDVYPCTPLQ…HAAPRTLIGD (390 aa)) form a condensation (C) domain region.

This sequence belongs to the NRP synthetase family.

The protein operates within alkaloid biosynthesis; ergot alkaloid biosynthesis. Its function is as follows. D-lysergyl-peptide-synthetase subunit 2; part of the gene cluster that mediates the biosynthesis of fungal ergot alkaloid. DmaW catalyzes the first step of ergot alkaloid biosynthesis by condensing dimethylallyl diphosphate (DMAP) and tryptophan to form 4-dimethylallyl-L-tryptophan. The second step is catalyzed by the methyltransferase easF that methylates 4-dimethylallyl-L-tryptophan in the presence of S-adenosyl-L-methionine, resulting in the formation of 4-dimethylallyl-L-abrine. The catalase easC and the FAD-dependent oxidoreductase easE then transform 4-dimethylallyl-L-abrine to chanoclavine-I which is further oxidized by easD in the presence of NAD(+), resulting in the formation of chanoclavine-I aldehyde. Agroclavine dehydrogenase easG then mediates the conversion of chanoclavine-I aldehyde to agroclavine via a non-enzymatic adduct reaction: the substrate is an iminium intermediate that is formed spontaneously from chanoclavine-I aldehyde in the presence of glutathione. The presence of easA is not required to complete this reaction. Further conversion of agroclavine to paspalic acid is a two-step process involving oxidation of agroclavine to elymoclavine and of elymoclavine to paspalic acid, the second step being performed by the elymoclavine oxidase cloA. Paspalic acid is then further converted to D-lysergic acid. Ergopeptines are assembled from D-lysergic acid and three different amino acids by the D-lysergyl-peptide-synthetases composed each of a monomudular and a trimodular nonribosomal peptide synthetase subunit. LpsB and lpsC encode the monomodular subunits responsible for D-lysergic acid activation and incorporation into the ergopeptine backbone. LpsA1 and A2 subunits encode the trimodular nonribosomal peptide synthetase assembling the tripeptide portion of ergopeptines. LpsA1 is responsible for formation of the major ergopeptine, ergotamine, and lpsA2 for alpha-ergocryptine, the minor ergopeptine of the total alkaloid mixture elaborated by C.purpurea. D-lysergyl-tripeptides are assembled by the nonribosomal peptide synthetases and released as N-(D-lysergyl-aminoacyl)-lactams. Cyclolization of the D-lysergyl-tripeptides is performed by the Fe(2+)/2-ketoglutarate-dependent dioxygenase easH which introduces a hydroxyl group into N-(D-lysergyl-aminoacyl)-lactam at alpha-C of the aminoacyl residue followed by spontaneous condensation with the terminal lactam carbonyl group. The protein is D-lysergyl-peptide-synthetase subunit 2 of Claviceps purpurea (strain 20.1) (Ergot fungus).